The primary structure comprises 137 residues: Small ribosomal subunit protein bS6 (137 aa).

A disordered region spans residues 99–137 (LSPMKAAESREDRRSGGDDRPRRSADSEERQSASQDEEE). A compositionally biased stretch (basic and acidic residues) spans 105–129 (AESREDRRSGGDDRPRRSADSEERQ).

The protein belongs to the bacterial ribosomal protein bS6 family.

Its function is as follows. Binds together with bS18 to 16S ribosomal RNA. In Marinobacter nauticus (strain ATCC 700491 / DSM 11845 / VT8) (Marinobacter aquaeolei), this protein is Small ribosomal subunit protein bS6.